The following is a 496-amino-acid chain: Aspartyl/glutamyl-tRNA(Asn/Gln) amidotransferase subunit B (496 aa).

Belongs to the GatB/GatE family. GatB subfamily. In terms of assembly, heterotrimer of A, B and C subunits.

The catalysed reaction is L-glutamyl-tRNA(Gln) + L-glutamine + ATP + H2O = L-glutaminyl-tRNA(Gln) + L-glutamate + ADP + phosphate + H(+). The enzyme catalyses L-aspartyl-tRNA(Asn) + L-glutamine + ATP + H2O = L-asparaginyl-tRNA(Asn) + L-glutamate + ADP + phosphate + 2 H(+). Functionally, allows the formation of correctly charged Asn-tRNA(Asn) or Gln-tRNA(Gln) through the transamidation of misacylated Asp-tRNA(Asn) or Glu-tRNA(Gln) in organisms which lack either or both of asparaginyl-tRNA or glutaminyl-tRNA synthetases. The reaction takes place in the presence of glutamine and ATP through an activated phospho-Asp-tRNA(Asn) or phospho-Glu-tRNA(Gln). This chain is Aspartyl/glutamyl-tRNA(Asn/Gln) amidotransferase subunit B, found in Nitrosospira multiformis (strain ATCC 25196 / NCIMB 11849 / C 71).